The sequence spans 852 residues: Chitin synthase 1 (852 aa).

2 disordered regions span residues 27–46 (EDQD…TNYA) and 53–97 (SSLR…QANG). The segment covering 53–74 (SSLRSQKSANKPTTAQNRNSAA) has biased composition (polar residues). A run of 7 helical transmembrane segments spans residues 492–509 (RWLN…IHFR), 532–552 (VISL…FYFI), 572–592 (IFDF…ICSM), 601–621 (FLFM…LFCS), 686–706 (FLPY…YAFC), 787–807 (THLV…ITTS), and 830–850 (CGLG…GIFT).

It belongs to the chitin synthase family. Class II subfamily.

Its subcellular location is the cell membrane. The catalysed reaction is [(1-&gt;4)-N-acetyl-beta-D-glucosaminyl](n) + UDP-N-acetyl-alpha-D-glucosamine = [(1-&gt;4)-N-acetyl-beta-D-glucosaminyl](n+1) + UDP + H(+). In terms of biological role, polymerizes chitin, a structural polymer of the cell wall and septum, by transferring the sugar moiety of UDP-GlcNAc to the non-reducing end of the growing chitin polymer. The polypeptide is Chitin synthase 1 (CHS1) (Mucor circinelloides f. lusitanicus (Mucor racemosus var. lusitanicus)).